Here is an 833-residue protein sequence, read N- to C-terminus: F1 capsule-anchoring protein (833 aa).

The N-terminal stretch at 1–25 (MRYSKLFLCAGLTLATLPCWGRAYT) is a signal peptide. A disulfide bridge connects residues Cys807 and Cys829.

The protein belongs to the fimbrial export usher family.

It localises to the cell outer membrane. A probable role in capsular biogenesis. It is likely that the caf1A molecule binds F1 antigen subunits during the extracellular secretion process. In Yersinia pestis, this protein is F1 capsule-anchoring protein (caf1A).